The following is a 346-amino-acid chain: F(420)H(2) dehydrogenase subunit H (346 aa).

The next 8 helical transmembrane spans lie at 18-38 (GIVGLVLIGVIFMGAMGAVWL), 91-111 (IFMLGSVFLMLVALPVGAVFI), 125-145 (ISVLYIEAVSALSIFGIFMVA), 170-190 (PLGITVISVAAMTGSLNIVDI), 196-216 (LHWNIFLQPLGCFVFFVSLMA), 257-277 (ILGSFLVALLFLGGWNVPGFI), 284-304 (GIIVPTGFLIVKVVFVLMVII), and 326-346 (LLPLALLNLVWAVGLGLYLGA).

Belongs to the complex I subunit 1 family. The FPO complex is composed of at least 13 different subunits. FpoA, FpoH, FpoJ, FpoK, FpoL, FpoM and FpoN proteins constitute the membrane sector of the complex.

The protein resides in the cell membrane. The enzyme catalyses methanophenazine + reduced coenzyme F420-(gamma-L-Glu)(n) = dihydromethanophenazine + oxidized coenzyme F420-(gamma-L-Glu)(n) + H(+). Its function is as follows. Component of the F(420)H(2) dehydrogenase (FPO complex) which is part of the energy-conserving F(420)H(2):heterodisulfide oxidoreductase system. The membrane-bound electron transfer system of the complex plays an important role in the metabolism of methylotrophic methanogens when the organisms grow on methanol or methylamines. Catalyzes the oxidation of methanophenazine to dihydromethanophenazine. It shuttles electrons from F(420)H(2), via FAD and iron-sulfur (Fe-S) centers, to methanophenazine (an electron carrier in the membrane). It couples the redox reaction to proton translocation (for every two electrons transferred, two hydrogen ions are translocated across the cytoplasmic membrane), and thus conserves the redox energy in a proton gradient. The protein is F(420)H(2) dehydrogenase subunit H of Methanosarcina barkeri (strain Fusaro / DSM 804).